We begin with the raw amino-acid sequence, 774 residues long: 5-methyltetrahydropteroyltriglutamate--homocysteine methyltransferase (774 aa).

5-methyltetrahydropteroyltri-L-glutamate contacts are provided by residues 23–26 (RELK) and Lys123. Residues 446 to 448 (IGS) and Glu499 each bind L-homocysteine. Residues 446-448 (IGS) and Glu499 contribute to the L-methionine site. 5-methyltetrahydropteroyltri-L-glutamate is bound by residues 530 to 531 (RC) and Trp576. Residue Asp614 coordinates L-homocysteine. Asp614 lines the L-methionine pocket. Glu620 contributes to the 5-methyltetrahydropteroyltri-L-glutamate binding site. Zn(2+)-binding residues include His656, Cys658, and Glu680. Residue His709 is the Proton donor of the active site. Cys741 is a Zn(2+) binding site.

The protein belongs to the vitamin-B12 independent methionine synthase family. Zn(2+) is required as a cofactor.

It carries out the reaction 5-methyltetrahydropteroyltri-L-glutamate + L-homocysteine = tetrahydropteroyltri-L-glutamate + L-methionine. It functions in the pathway amino-acid biosynthesis; L-methionine biosynthesis via de novo pathway; L-methionine from L-homocysteine (MetE route): step 1/1. In terms of biological role, catalyzes the transfer of a methyl group from 5-methyltetrahydrofolate to homocysteine resulting in methionine formation. This chain is 5-methyltetrahydropteroyltriglutamate--homocysteine methyltransferase, found in Aliivibrio fischeri (strain MJ11) (Vibrio fischeri).